We begin with the raw amino-acid sequence, 229 residues long: 2-C-methyl-D-erythritol 4-phosphate cytidylyltransferase (229 aa).

This sequence belongs to the IspD/TarI cytidylyltransferase family. IspD subfamily.

The enzyme catalyses 2-C-methyl-D-erythritol 4-phosphate + CTP + H(+) = 4-CDP-2-C-methyl-D-erythritol + diphosphate. It participates in isoprenoid biosynthesis; isopentenyl diphosphate biosynthesis via DXP pathway; isopentenyl diphosphate from 1-deoxy-D-xylulose 5-phosphate: step 2/6. Its function is as follows. Catalyzes the formation of 4-diphosphocytidyl-2-C-methyl-D-erythritol from CTP and 2-C-methyl-D-erythritol 4-phosphate (MEP). The polypeptide is 2-C-methyl-D-erythritol 4-phosphate cytidylyltransferase (Clostridium acetobutylicum (strain ATCC 824 / DSM 792 / JCM 1419 / IAM 19013 / LMG 5710 / NBRC 13948 / NRRL B-527 / VKM B-1787 / 2291 / W)).